A 103-amino-acid polypeptide reads, in one-letter code: Small ribosomal subunit protein uS17 (103 aa).

The segment at 78–103 (SHSPKADKSAGSTAPAPEAAAKEVSE) is disordered.

The protein belongs to the universal ribosomal protein uS17 family. Part of the 30S ribosomal subunit.

In terms of biological role, one of the primary rRNA binding proteins, it binds specifically to the 5'-end of 16S ribosomal RNA. In Parasynechococcus marenigrum (strain WH8102), this protein is Small ribosomal subunit protein uS17.